The chain runs to 507 residues: Glucose-6-phosphate 1-dehydrogenase (507 aa).

Positions 57 and 168 each coordinate NADP(+). The substrate site is built by His198, Lys202, Glu236, and Asp255. Catalysis depends on His260, which acts as the Proton acceptor. Lys356 provides a ligand contact to substrate.

Belongs to the glucose-6-phosphate dehydrogenase family.

It carries out the reaction D-glucose 6-phosphate + NADP(+) = 6-phospho-D-glucono-1,5-lactone + NADPH + H(+). It participates in carbohydrate degradation; pentose phosphate pathway; D-ribulose 5-phosphate from D-glucose 6-phosphate (oxidative stage): step 1/3. Catalyzes the oxidation of glucose 6-phosphate to 6-phosphogluconolactone. This chain is Glucose-6-phosphate 1-dehydrogenase, found in Chlamydia muridarum (strain MoPn / Nigg).